We begin with the raw amino-acid sequence, 187 residues long: Core-binding factor subunit beta (187 aa).

Serine 10 carries the phosphoserine; by CK2 modification. The segment at 139–187 (AQQAFEEARRRTREFEDRDRSHREEMEARRQQDPSPGSNLGGGDDLKLR) is disordered. The segment covering 144–170 (EEARRRTREFEDRDRSHREEMEARRQQ) has biased composition (basic and acidic residues). Residue serine 159 is modified to Phosphoserine; by PKC.

Belongs to the CBF-beta family. As to quaternary structure, heterodimer with RUNX1, RUNX2 and RUNX3. Interacts with COPRS. Found in a complex with PRMT5 and RUNX1. In terms of tissue distribution, expressed in all tissues tested. Highest level in thymus, but also abundantly expressed in muscle, lung and brain.

It is found in the nucleus. Forms the heterodimeric complex core-binding factor (CBF) with RUNX family proteins (RUNX1, RUNX2, and RUNX3). RUNX members modulate the transcription of their target genes through recognizing the core consensus binding sequence 5'-TGTGGT-3', or very rarely, 5'-TGCGGT-3', within their regulatory regions via their runt domain, while CBFB is a non-DNA-binding regulatory subunit that allosterically enhances the sequence-specific DNA-binding capacity of RUNX. The heterodimers bind to the core site of a number of enhancers and promoters, including murine leukemia virus, polyomavirus enhancer, T-cell receptor enhancers, LCK, IL3 and GM-CSF promoters. CBF complexes repress ZBTB7B transcription factor during cytotoxic (CD8+) T cell development. They bind to RUNX-binding sequence within the ZBTB7B locus acting as transcriptional silencer and allowing for cytotoxic T cell differentiation. This is Core-binding factor subunit beta (Cbfb) from Mus musculus (Mouse).